Consider the following 166-residue polypeptide: Putative pre-16S rRNA nuclease (166 aa).

This sequence belongs to the YqgF nuclease family.

The protein localises to the cytoplasm. Its function is as follows. Could be a nuclease involved in processing of the 5'-end of pre-16S rRNA. This chain is Putative pre-16S rRNA nuclease, found in Mesorhizobium japonicum (strain LMG 29417 / CECT 9101 / MAFF 303099) (Mesorhizobium loti (strain MAFF 303099)).